A 231-amino-acid polypeptide reads, in one-letter code: UMP-CMP kinase (231 aa).

ATP is bound at residue 57-62 (GSGKGT). Residues 77-106 (SAGDLLRREIASGSAYGSVILSTIREGKIV) form an NMP region. A ribonucleoside 5'-phosphate contacts are provided by residues Arg-83, 104–106 (KIV), and 131–134 (GFPR). Position 138 (Asn-138) interacts with CMP. The segment at 169-177 (NRNQGRVDD) is LID. Position 170 (Arg-170) interacts with ATP. The a ribonucleoside 5'-phosphate site is built by Arg-174 and Arg-185. Gly-213 is an ATP binding site.

Belongs to the adenylate kinase family. UMP-CMP kinase subfamily. Monomer. It depends on Mg(2+) as a cofactor.

The protein resides in the cytoplasm. Its subcellular location is the nucleus. It carries out the reaction CMP + ATP = CDP + ADP. The catalysed reaction is dCMP + ATP = dCDP + ADP. The enzyme catalyses UMP + ATP = UDP + ADP. Functionally, catalyzes the phosphorylation of pyrimidine nucleoside monophosphates at the expense of ATP. Plays an important role in de novo pyrimidine nucleotide biosynthesis. Has preference for UMP and CMP as phosphate acceptors. This is UMP-CMP kinase from Prunus armeniaca (Apricot).